Consider the following 301-residue polypeptide: Epimerase family protein Mb2239 (301 aa).

Belongs to the NAD(P)-dependent epimerase/dehydratase family. SDR39U1 subfamily.

The chain is Epimerase family protein Mb2239 from Mycobacterium bovis (strain ATCC BAA-935 / AF2122/97).